The chain runs to 784 residues: DNA repair and recombination protein RAD54-like (784 aa).

A required for chromatin remodeling, strand pairing activities and coupling of ATPase activity region spans residues 2-9 (RRSLAPSQ). Thr-22 bears the Phosphothreonine mark. The region spanning 169–344 (EGKKGNFNGC…FSLVNFVNPE (176 aa)) is the Helicase ATP-binding domain. Residue 182 to 189 (DEMGLGKT) participates in ATP binding. The DEGH box motif lies at 295–298 (DEGH). In terms of domain architecture, Helicase C-terminal spans 501–658 (LLDFMLATIR…NNESAEKHFT (158 aa)). Positions 742 to 784 (QAIKESEETKQEAEDTSIPAKSKRKRSTTPESDDCNDEDFKGF) are disordered. Residues 745–754 (KESEETKQEA) are compositionally biased toward basic and acidic residues.

This sequence belongs to the SNF2/RAD54 helicase family. In terms of assembly, interacts (via N-terminus) with spn-A/Rad51.

It localises to the nucleus. Its function is as follows. Involved in mitotic DNA repair and meiotic recombination. Functions in the recombinational DNA repair pathway. Essential for interhomolog gene conversion (GC), but may have a less important role in intersister GC than spn-A/Rad51. In the presence of DNA, spn-A/Rad51 enhances the ATPase activity of okr/Rad54. This chain is DNA repair and recombination protein RAD54-like, found in Drosophila willistoni (Fruit fly).